Consider the following 316-residue polypeptide: Na(+)/H(+) exchange regulatory cofactor NHE-RF2 (316 aa).

The region spanning 11–91 (LCRLVRGEQG…ETRLLVVDKE (81 aa)) is the PDZ 1 domain. A disordered region spans residues 109 to 148 (QRGLPPAHDPWEPKPDWARAGSLSSDAGQKDVNGPPRELR). Residues Ser130, Ser183, and Ser254 each carry the phosphoserine modification. A PDZ 2 domain is found at 151–231 (LCHLRKGPQG…EARLLLVDPE (81 aa)). Residues 244–303 (TEEHVEGPLPSPITNGTSPAQDASAWKRDPFQESGLHLSPTAAEAKEKARATRVNKRAPQ) form a disordered region. A compositionally biased stretch (polar residues) spans 255 to 264 (PITNGTSPAQ). Phosphoserine is present on Ser282.

Homodimer, and heterodimer with NHERF1. Binds ADRB2, SLC9A3, P2RY1, P2YR2, SRY, RDX, PDZK1 and LPAR2. Found in a complex with EZR, PODXL and NHERF2. Interacts (via the PDZ domains) with PODXL (via the C-terminal PDZ-binding motif DTHL); interaction is detected in glomerular epithelium cells. Binds PODXL. Interacts with SGK1 and KCNJ1/ROMK1. Interacts (via the PDZ domains) with SLC26A6. In terms of tissue distribution, detected in kidney glomeruli.

The protein resides in the endomembrane system. It localises to the nucleus. The protein localises to the apical cell membrane. Scaffold protein that connects plasma membrane proteins with members of the ezrin/moesin/radixin family and thereby helps to link them to the actin cytoskeleton and to regulate their surface expression. Necessary for cAMP-mediated phosphorylation and inhibition of SLC9A3. May also act as scaffold protein in the nucleus. This Oryctolagus cuniculus (Rabbit) protein is Na(+)/H(+) exchange regulatory cofactor NHE-RF2 (NHERF2).